The chain runs to 92 residues: Large ribosomal subunit protein bL27 (92 aa).

The propeptide occupies 1–9 (MLVMNLQYF).

The protein belongs to the bacterial ribosomal protein bL27 family. Post-translationally, the N-terminus is cleaved by ribosomal processing cysteine protease Prp.

This chain is Large ribosomal subunit protein bL27, found in Heliobacterium modesticaldum (strain ATCC 51547 / Ice1).